We begin with the raw amino-acid sequence, 477 residues long: UDP-N-acetylmuramate--L-alanine ligase (477 aa).

An ATP-binding site is contributed by 122–128 (GTHGKTT).

The protein belongs to the MurCDEF family.

The protein localises to the cytoplasm. It carries out the reaction UDP-N-acetyl-alpha-D-muramate + L-alanine + ATP = UDP-N-acetyl-alpha-D-muramoyl-L-alanine + ADP + phosphate + H(+). It participates in cell wall biogenesis; peptidoglycan biosynthesis. In terms of biological role, cell wall formation. This chain is UDP-N-acetylmuramate--L-alanine ligase, found in Xanthomonas oryzae pv. oryzae (strain MAFF 311018).